Reading from the N-terminus, the 341-residue chain is Serine proteinase inhibitor 2 (341 aa).

This sequence belongs to the serpin family. Poxviruses subfamily.

Its subcellular location is the host cytoplasm. Viral serpin that inhibits both cysteine and serine proteinases involved in the regulation of host inflammatory and apoptosis processes. Major anti-apoptotic protein which inhibits both intrinsic and extrinsic pathways and strongly cleaves host CASP1 and CASP8 but is a rather poor inhibitor of host CASP3. Prevents the proteolytic activity of host interleukin-1-beta converting enzyme (ICE) and ICE-like enzymes. Can also block apoptosis through host tumor necrosis factor (TNF) receptor. The sequence is that of Serine proteinase inhibitor 2 (OPG199) from Bos taurus (Bovine).